The sequence spans 299 residues: Taste receptor type 2 member 1 (299 aa).

The Extracellular portion of the chain corresponds to Met-1 to Tyr-9. Residues Phe-10–Val-30 form a helical membrane-spanning segment. Over Asn-31–Arg-55 the chain is Cytoplasmic. A helical transmembrane segment spans residues Ile-56–Ile-76. Over Met-77 to Asn-81 the chain is Extracellular. Residues Cys-82 to Phe-102 traverse the membrane as a helical segment. Residues Tyr-103 to Lys-124 are Cytoplasmic-facing. Residues Leu-125 to Ser-145 form a helical membrane-spanning segment. The Extracellular segment spans residues Lys-146 to Ser-178. Asn-163 carries an N-linked (GlcNAc...) asparagine glycan. Residues Phe-179–Phe-199 traverse the membrane as a helical segment. Residues Ser-200–Ala-222 are Cytoplasmic-facing. Residues Pro-223–Ile-243 traverse the membrane as a helical segment. The Extracellular portion of the chain corresponds to Lys-244 to Phe-257. Residues Ile-258–Ile-278 traverse the membrane as a helical segment. The Cytoplasmic portion of the chain corresponds to Leu-279–Gln-299.

It belongs to the G-protein coupled receptor T2R family.

The protein resides in the membrane. Its function is as follows. Receptor that may play a role in the perception of bitterness and is gustducin-linked. May play a role in sensing the chemical composition of the gastrointestinal content. The activity of this receptor may stimulate alpha gustducin, mediate PLC-beta-2 activation and lead to the gating of TRPM5. This Gorilla gorilla gorilla (Western lowland gorilla) protein is Taste receptor type 2 member 1 (TAS2R1).